Consider the following 154-residue polypeptide: Large ribosomal subunit protein uL30 (154 aa).

The interval 114–139 is disordered; sequence PTLRLHPPRGGHDGIKHPTKEGGQLG. Basic and acidic residues predominate over residues 123-133; sequence GGHDGIKHPTK.

The protein belongs to the universal ribosomal protein uL30 family. Part of the 50S ribosomal subunit.

This is Large ribosomal subunit protein uL30 from Natronomonas pharaonis (strain ATCC 35678 / DSM 2160 / CIP 103997 / JCM 8858 / NBRC 14720 / NCIMB 2260 / Gabara) (Halobacterium pharaonis).